A 428-amino-acid polypeptide reads, in one-letter code: Adenylosuccinate synthetase, chloroplastic (428 aa).

Residues 17 to 23 (GDEGKGK) and 45 to 47 (GHT) each bind GTP. The active-site Proton acceptor is D18. Mg(2+)-binding residues include D18 and G45. IMP-binding positions include 18 to 21 (DEGK), 43 to 46 (NAGH), T135, R149, N226, T241, and R305. H46 serves as the catalytic Proton donor. 301–307 (TTTGRPR) lines the substrate pocket. GTP contacts are provided by residues R307, 333–335 (KLD), and 416–418 (GVG).

This sequence belongs to the adenylosuccinate synthetase family. As to quaternary structure, homodimer. The cofactor is Mg(2+).

Its subcellular location is the plastid. It is found in the chloroplast. It catalyses the reaction IMP + L-aspartate + GTP = N(6)-(1,2-dicarboxyethyl)-AMP + GDP + phosphate + 2 H(+). Its pathway is purine metabolism; AMP biosynthesis via de novo pathway; AMP from IMP: step 1/2. Plays an important role in the de novo pathway and in the salvage pathway of purine nucleotide biosynthesis. Catalyzes the first committed step in the biosynthesis of AMP from IMP. This chain is Adenylosuccinate synthetase, chloroplastic, found in Ostreococcus lucimarinus (strain CCE9901).